The primary structure comprises 466 residues: Ribulose bisphosphate carboxylase large chain (466 aa).

Lys5 carries the post-translational modification N6,N6,N6-trimethyllysine. Residues Asn114 and Thr164 each contribute to the substrate site. Residue Lys166 is the Proton acceptor of the active site. Lys168 contributes to the substrate binding site. 3 residues coordinate Mg(2+): Lys192, Asp194, and Glu195. Lys192 is modified (N6-carboxylysine). The Proton acceptor role is filled by His285. 3 residues coordinate substrate: Arg286, His318, and Ser370.

It belongs to the RuBisCO large chain family. Type I subfamily. In terms of assembly, heterohexadecamer of 8 large chains and 8 small chains; disulfide-linked. The disulfide link is formed within the large subunit homodimers. The cofactor is Mg(2+). The disulfide bond which can form in the large chain dimeric partners within the hexadecamer appears to be associated with oxidative stress and protein turnover.

The protein resides in the plastid. The protein localises to the chloroplast. It catalyses the reaction 2 (2R)-3-phosphoglycerate + 2 H(+) = D-ribulose 1,5-bisphosphate + CO2 + H2O. It carries out the reaction D-ribulose 1,5-bisphosphate + O2 = 2-phosphoglycolate + (2R)-3-phosphoglycerate + 2 H(+). RuBisCO catalyzes two reactions: the carboxylation of D-ribulose 1,5-bisphosphate, the primary event in carbon dioxide fixation, as well as the oxidative fragmentation of the pentose substrate in the photorespiration process. Both reactions occur simultaneously and in competition at the same active site. This is Ribulose bisphosphate carboxylase large chain from Drosera capensis (Cape sundew).